We begin with the raw amino-acid sequence, 472 residues long: Glutamate--tRNA ligase (472 aa).

The short motif at 18 to 28 (PSPTGYLHIGG) is the 'HIGH' region element. Positions 122-138 (RARGEKPRYDGRWRPEP) are enriched in basic and acidic residues. Positions 122–150 (RARGEKPRYDGRWRPEPGKTLPVPPSGVQ) are disordered. Positions 250–254 (KLSKR) match the 'KMSKS' region motif. An ATP-binding site is contributed by Lys-253.

It belongs to the class-I aminoacyl-tRNA synthetase family. Glutamate--tRNA ligase type 1 subfamily. As to quaternary structure, monomer.

It localises to the cytoplasm. The catalysed reaction is tRNA(Glu) + L-glutamate + ATP = L-glutamyl-tRNA(Glu) + AMP + diphosphate. Functionally, catalyzes the attachment of glutamate to tRNA(Glu) in a two-step reaction: glutamate is first activated by ATP to form Glu-AMP and then transferred to the acceptor end of tRNA(Glu). This Thiobacillus denitrificans (strain ATCC 25259 / T1) protein is Glutamate--tRNA ligase.